The chain runs to 432 residues: MGNNVVVLGTQWGDEGKGKIVDLLTERAKYVVRYQGGHNAGHTLVINGEKTVLHLIPSGILRDNVTSIIGNGVVLSPAALMKEMKGLEDRGIPVRERLLLSEACPLILDYHVALDVAREKARGAKAIGTTGRGIGPAYEDKVARRGLRVGDLFDKATFADKLKEVMEYHNFQLVNFYKADAVDYQKVLDDVMAVADILTGMVVDVSDLLDQARKRGDFVMFEGAQGTLLDIDHGTYPYVTSSNTTAGGVATGSGLGPRYVDYVLGIIKAYSTRVGAGPFPTELFDDIGEFLCKQGNEFGATTGRRRRTGWLDVVAVRRAVQINSLSGFCLTKLDVLDGLKEVKLCIGYRMPDGREVTTTPLAADDWEGIEPIYETMPGWSETTFGVKARSGLPQAALDYIKRIEELTEVPIDIISTGPDRSETMILRDPFDA.

GTP is bound by residues 13-19 (GDEGKGK) and 41-43 (GHT). Catalysis depends on Asp14, which acts as the Proton acceptor. Positions 14 and 41 each coordinate Mg(2+). IMP contacts are provided by residues 14 to 17 (DEGK), 39 to 42 (NAGH), Thr130, Arg144, Gln225, Thr240, and Arg304. His42 functions as the Proton donor in the catalytic mechanism. 300–306 (ATTGRRR) is a substrate binding site. GTP-binding positions include Arg306, 332–334 (KLD), and 415–417 (STG).

This sequence belongs to the adenylosuccinate synthetase family. Homodimer. Mg(2+) is required as a cofactor.

It localises to the cytoplasm. It catalyses the reaction IMP + L-aspartate + GTP = N(6)-(1,2-dicarboxyethyl)-AMP + GDP + phosphate + 2 H(+). It participates in purine metabolism; AMP biosynthesis via de novo pathway; AMP from IMP: step 1/2. Plays an important role in the de novo pathway of purine nucleotide biosynthesis. Catalyzes the first committed step in the biosynthesis of AMP from IMP. In Enterobacter sp. (strain 638), this protein is Adenylosuccinate synthetase.